A 233-amino-acid polypeptide reads, in one-letter code: MAKLTKRARVIREKVDATKLYDINEAVVLLQELATAKFVESVDVAVNLGIDPRKSDQNVRGATVLPHGTGRDVRVAVFTQGANAEAAIAAGAELVGMEDLAEKVKAGEMNFDVVIASPDAMRVVGMLGQILGPRGLMPNPKTGTVTPNVAEAVKNAKAGQVRYRNDKNGIIHTTIGKVTFTTEQLKENLESLVSALKKAKPAVAKGIYVKKISISTTMGAGVAIDQGSLEEAK.

It belongs to the universal ribosomal protein uL1 family. As to quaternary structure, part of the 50S ribosomal subunit.

Binds directly to 23S rRNA. The L1 stalk is quite mobile in the ribosome, and is involved in E site tRNA release. In terms of biological role, protein L1 is also a translational repressor protein, it controls the translation of the L11 operon by binding to its mRNA. The polypeptide is Large ribosomal subunit protein uL1 (Shewanella frigidimarina (strain NCIMB 400)).